Here is a 421-residue protein sequence, read N- to C-terminus: Alpha-1-antitrypsin-related protein (421 aa).

The N-terminal stretch at 1-21 (MPFSVSWGILLLAGLCCLVPS) is a signal peptide. Asparagine 56, asparagine 110, asparagine 148, and asparagine 274 each carry an N-linked (GlcNAc...) asparagine glycan.

It belongs to the serpin family. Interacts with CANX and PDIA3. Glycosylated. As to expression, expressed in the liver, leukocytes and testis. Also detected in brain, colon, uterus, esophagus, spleen, trachea, kidney and lung.

It is found in the endoplasmic reticulum. Putative serine protease inhibitor. The sequence is that of Alpha-1-antitrypsin-related protein (SERPINA2) from Homo sapiens (Human).